The primary structure comprises 446 residues: Phosphoglucosamine mutase (446 aa).

S100 serves as the catalytic Phosphoserine intermediate. S100, D241, D243, and D245 together coordinate Mg(2+). S100 bears the Phosphoserine mark.

This sequence belongs to the phosphohexose mutase family. Requires Mg(2+) as cofactor. Activated by phosphorylation.

It catalyses the reaction alpha-D-glucosamine 1-phosphate = D-glucosamine 6-phosphate. Functionally, catalyzes the conversion of glucosamine-6-phosphate to glucosamine-1-phosphate. This is Phosphoglucosamine mutase from Methylobacterium nodulans (strain LMG 21967 / CNCM I-2342 / ORS 2060).